Consider the following 90-residue polypeptide: Small ribosomal subunit protein bS16 (90 aa).

The protein belongs to the bacterial ribosomal protein bS16 family.

This is Small ribosomal subunit protein bS16 from Bacillus cytotoxicus (strain DSM 22905 / CIP 110041 / 391-98 / NVH 391-98).